We begin with the raw amino-acid sequence, 82 residues long: Conotoxin MiK42 (82 aa).

A signal peptide spans 1-22 (MKLTCALIVAMLLLTACQLITT). The propeptide occupies 23–49 (DDFRGRQQYRTARSRTKMQNYKIFRLT). Cystine bridges form between Cys52/Cys67, Cys59/Cys70, and Cys66/Cys80.

The protein belongs to the conotoxin O1 superfamily. Expressed by the venom duct.

It is found in the secreted. The sequence is that of Conotoxin MiK42 from Conus miles (Soldier cone).